The following is a 480-amino-acid chain: MSKRAAEETVEFNSKNGPGQRGTVADNVDTEMGEFEDAYEDEIESEEEYIEADGEKDNGMDEEEQNDAQPSKIPWLPGGKINADEKLVADPSVYEMLHNIQVKWPFLSFDILQDSLGEERRAWPHQMYLVGGSQALDSNDNELTVMKLSQLYKTQHDENDDASDNSDVEEDPILEHKSISTKGACNRVRSARRPANSSKESLLASFHETGKVHIWDIAPHLRSLDSPGVMVSRKENSPLYTVNRHKTEGYALDWSPFEYSLLSGDNANEIFLTKYSNGGWQTDSSPFLSHTAAVEDLQWSPSEKNVFSSCSCDGTFRIWDVRNKQKTSALTVNAHPGVDVNVLSWNTRVPNLLATGADNGVWSVWDLRSLKSSSSVATPVASFKWHRAPIYSIEWHPNEDSVIGVVGADNQISLWDLSVELDEEEQDSRAAEGLQDVPPQLMFIHMGQQEIKEMHWHRQIPGTIVSTAMTGINVFKTITF.

Disordered regions lie at residues 1–78 (MSKR…WLPG) and 155–176 (QHDENDDASDNSDVEEDPILEH). Composition is skewed to acidic residues over residues 28 to 52 (VDTEMGEFEDAYEDEIESEEEYIEA) and 158 to 172 (ENDDASDNSDVEEDP). Ser-163 and Ser-166 each carry phosphoserine. 5 WD repeats span residues 183 to 225 (GACN…RSLD), 289 to 329 (SHTA…KTSA), 334 to 375 (AHPG…SSSS), 385 to 425 (WHRA…DEEE), and 446 to 480 (MGQQEIKEMHWHRQIPGTIVSTAMTGINVFKTITF).

Associates with ribosomal protein L3.

Its subcellular location is the cytoplasm. The protein resides in the nucleus. It localises to the nucleolus. Involved in regulation of L3 expression and stability and plays a role in early 60S ribosomal subunit assembly. May be required for proper assembly of pre-ribosomal particles during early ribosome biogenesis, presumably by targeting L3 onto the 35S precursor rRNA. In Schizosaccharomyces pombe (strain 972 / ATCC 24843) (Fission yeast), this protein is Ribosome assembly protein rrb1 (rrb1).